The chain runs to 84 residues: Small ribosomal subunit protein uS17 (84 aa).

The protein belongs to the universal ribosomal protein uS17 family. In terms of assembly, part of the 30S ribosomal subunit.

In terms of biological role, one of the primary rRNA binding proteins, it binds specifically to the 5'-end of 16S ribosomal RNA. The chain is Small ribosomal subunit protein uS17 from Vibrio vulnificus (strain CMCP6).